A 179-amino-acid chain; its full sequence is MNPPLPHFRYHPEPLASGSIEASATTCQCCGKARGYVYTGSPYSRHELPPGSLCPWCIADGSAAARYEASFSDDYPLLDAGVAADIVTEVCERTPGYTSWQQERWLVCCEDACAFRGDAGREEIGQLGAEGLAQRFADFAWPAITWQRLVDAYTPGGNPAIYRFDCLHCGQAHYDLDFT.

The protein belongs to the UPF0167 family.

The protein is UPF0167 protein PA1536 of Pseudomonas aeruginosa (strain ATCC 15692 / DSM 22644 / CIP 104116 / JCM 14847 / LMG 12228 / 1C / PRS 101 / PAO1).